The primary structure comprises 201 residues: Acyl-homoserine-lactone synthase (201 aa).

It belongs to the autoinducer synthase family.

The enzyme catalyses a fatty acyl-[ACP] + S-adenosyl-L-methionine = an N-acyl-L-homoserine lactone + S-methyl-5'-thioadenosine + holo-[ACP] + H(+). Functionally, required for the synthesis of BHL (N-butanoyl-L-homoserine lactone), and HHL (N-hexanoyl-L-homoserine lactone) autoinducer molecules which bind to RhlR and thus acts in elastase biosynthesis regulation. This Pseudomonas aeruginosa (strain ATCC 15692 / DSM 22644 / CIP 104116 / JCM 14847 / LMG 12228 / 1C / PRS 101 / PAO1) protein is Acyl-homoserine-lactone synthase (rhlI).